Consider the following 252-residue polypeptide: Phosphomannomutase (252 aa).

The Nucleophile role is filled by Asp-13. Residues Asp-13 and Asp-15 each contribute to the Mg(2+) site. Residue Asp-15 is the Proton donor/acceptor of the active site. Positions 22, 124, 135, 142, 180, and 182 each coordinate alpha-D-mannose 1-phosphate. Positions 208, 220, and 225 each coordinate Mg(2+).

It belongs to the eukaryotic PMM family. As to quaternary structure, homodimer. Mg(2+) is required as a cofactor. Expressed in roots, stems, leaves, flowers and immature fruits.

Its subcellular location is the cytoplasm. The enzyme catalyses alpha-D-mannose 1-phosphate = D-mannose 6-phosphate. It participates in nucleotide-sugar biosynthesis; GDP-alpha-D-mannose biosynthesis; alpha-D-mannose 1-phosphate from D-fructose 6-phosphate: step 2/2. Functionally, catalyzes the interconversion of mannose-6-phosphate to mannose-1-phosphate, the precursor for the synthesis of GDP-mannose. GDP-mannose is an essential sugar nucleotide for the synthesis of D-mannose-containing cell wall polysaccharides (galactomannans and glucomannans), glycolipids, glycoproteins and the antioxidant L-ascorbate. Can complement the yeast temperature-sensitive mutant sec53-6. This is Phosphomannomutase from Nicotiana benthamiana.